The chain runs to 265 residues: NADH dehydrogenase [ubiquinone] iron-sulfur protein 3, mitochondrial (265 aa).

Residues 1–33 constitute a mitochondrion transit peptide; that stretch reads MAALIRNLGARAAVAALSAKHVVPAAGSTALRM.

This sequence belongs to the complex I 30 kDa subunit family. Part of the mitochondrial membrane respiratory chain NADH dehydrogenase (Complex I). Interacts with sicily; interaction is stronger with unprocessed sicily protein.

Its subcellular location is the mitochondrion. The catalysed reaction is a ubiquinone + NADH + 5 H(+)(in) = a ubiquinol + NAD(+) + 4 H(+)(out). In terms of biological role, core subunit of the mitochondrial membrane respiratory chain NADH dehydrogenase (Complex I) that is believed to belong to the minimal assembly required for catalysis. Complex I functions in the transfer of electrons from NADH to the respiratory chain. The immediate electron acceptor for the enzyme is believed to be ubiquinone. This Drosophila melanogaster (Fruit fly) protein is NADH dehydrogenase [ubiquinone] iron-sulfur protein 3, mitochondrial.